The primary structure comprises 272 residues: 1,4-dihydroxy-2-naphthoyl-CoA synthase (272 aa).

Residues R33, 72–76 (SGGDQ), Y84, 116–120 (YAIGG), T142, S148, Y245, and K260 contribute to the substrate site. 141–143 (QTG) is a binding site for hydrogencarbonate.

It belongs to the enoyl-CoA hydratase/isomerase family. MenB subfamily. Hydrogencarbonate is required as a cofactor.

It carries out the reaction 2-succinylbenzoyl-CoA + H(+) = 1,4-dihydroxy-2-naphthoyl-CoA + H2O. The protein operates within quinol/quinone metabolism; 1,4-dihydroxy-2-naphthoate biosynthesis; 1,4-dihydroxy-2-naphthoate from chorismate: step 6/7. It functions in the pathway quinol/quinone metabolism; menaquinone biosynthesis. Its function is as follows. Converts o-succinylbenzoyl-CoA (OSB-CoA) to 1,4-dihydroxy-2-naphthoyl-CoA (DHNA-CoA). The sequence is that of 1,4-dihydroxy-2-naphthoyl-CoA synthase from Staphylococcus epidermidis (strain ATCC 12228 / FDA PCI 1200).